Here is a 173-residue protein sequence, read N- to C-terminus: NADH-ubiquinone oxidoreductase chain 6 (173 aa).

The next 5 membrane-spanning stretches (helical) occupy residues 1–21 (MTYF…AVAS), 27–47 (YGVV…LSLG), 48–68 (VSFV…VVFV), 87–107 (VVGY…VGGF), and 139–159 (CGVG…FVVL).

Belongs to the complex I subunit 6 family.

It localises to the mitochondrion membrane. It catalyses the reaction a ubiquinone + NADH + 5 H(+)(in) = a ubiquinol + NAD(+) + 4 H(+)(out). Its function is as follows. Core subunit of the mitochondrial membrane respiratory chain NADH dehydrogenase (Complex I) that is believed to belong to the minimal assembly required for catalysis. Complex I functions in the transfer of electrons from NADH to the respiratory chain. The immediate electron acceptor for the enzyme is believed to be ubiquinone. The sequence is that of NADH-ubiquinone oxidoreductase chain 6 (MT-ND6) from Aethia pusilla (Least auklet).